Reading from the N-terminus, the 328-residue chain is Arabinose 5-phosphate isomerase KdsD (328 aa).

One can recognise an SIS domain in the interval 42 to 184 (CEKMFWCKGK…AVALLKARGF (143 aa)). Substrate contacts are provided by residues 75–76 (GT), His82, His88, 114–123 (ALIPVLKRLH), 148–150 (KVA), Thr222, and Asp275. A Zn(2+)-binding site is contributed by His82. One can recognise a CBS 1 domain in the interval 210-268 (MHTGDEIPHVKKTASLRDALLEVTRKNLGMTVICDDNMMIEGIFTDGDLRRVFDMGVDV). The CBS 2 domain maps to 277-328 (MTPGGIRVRPGILAVEALNLMQSRHITSVMVADGDHLLGVLHMHDLLRAGVV).

This sequence belongs to the SIS family. GutQ/KpsF subfamily. Homotetramer.

It catalyses the reaction D-arabinose 5-phosphate = D-ribulose 5-phosphate. Its pathway is carbohydrate biosynthesis; 3-deoxy-D-manno-octulosonate biosynthesis; 3-deoxy-D-manno-octulosonate from D-ribulose 5-phosphate: step 1/3. It functions in the pathway bacterial outer membrane biogenesis; lipopolysaccharide biosynthesis. Completely inhibited by 10 uM of nickel, copper, cadmium and mercury ions. Inhibited by zinc with an IC(50) of 1-3 uM. Metal ion inhibition may be a mechanism to control activity in vivo. Involved in the biosynthesis of 3-deoxy-D-manno-octulosonate (KDO), a unique 8-carbon sugar component of lipopolysaccharides (LPSs). KdsD is not essential in the KDO biosynthesis and can be substituted by GutQ. Catalyzes the reversible aldol-ketol isomerization between D-ribulose 5-phosphate (Ru5P) and D-arabinose 5-phosphate (A5P). This Escherichia coli (strain K12) protein is Arabinose 5-phosphate isomerase KdsD (kdsD).